The chain runs to 432 residues: MGKSVAILGAQWGDEGKGKIVDLLTDRVKYVVRYQGGHNAGHTLIINGEKTVLRLIPSGILRDNVTCLIGNGVVLSPEALMKEMGELEARGINVRDRLKISEACPLILPYHVAMDHAREAALGKNKIGTTGRGIGPAYEDKVARRGLRVSDLFDKEAFAEKLKDILDYYNFQLVHYYKVEPVDFQKTLDDVFAIADVIKGMVADVTTLLHQARKEGVNILFEGAQGTMLDIDHGTYPFVTSSNTTAGGVATGSGFGPRNLDYVLGIIKAYCTRVGSGPFTTELFDEVGAEIARKGNEFGAVTGRPRRCGWFDAVAVRRAVQINSISGFCMTKLDVLDGFEELKICTAYKMPNGEIVEYAPMAAKDWEGVEPIYETMPGWSENTFRVTKREELPQAALDYIKRIEELVGVPVDILSTGPDRVETMILRDPFAA.

Residues 13-19 (GDEGKGK) and 41-43 (GHT) each bind GTP. Asp14 acts as the Proton acceptor in catalysis. Residues Asp14 and Gly41 each contribute to the Mg(2+) site. Residues 14–17 (DEGK), 39–42 (NAGH), Thr130, Arg144, Gln225, Thr240, and Arg304 each bind IMP. His42 acts as the Proton donor in catalysis. Residue 300–306 (AVTGRPR) coordinates substrate. GTP-binding positions include Arg306, 332–334 (KLD), and 415–417 (STG).

This sequence belongs to the adenylosuccinate synthetase family. In terms of assembly, homodimer. Requires Mg(2+) as cofactor.

The protein resides in the cytoplasm. The catalysed reaction is IMP + L-aspartate + GTP = N(6)-(1,2-dicarboxyethyl)-AMP + GDP + phosphate + 2 H(+). The protein operates within purine metabolism; AMP biosynthesis via de novo pathway; AMP from IMP: step 1/2. Functionally, plays an important role in the de novo pathway of purine nucleotide biosynthesis. Catalyzes the first committed step in the biosynthesis of AMP from IMP. The protein is Adenylosuccinate synthetase of Actinobacillus pleuropneumoniae serotype 3 (strain JL03).